A 306-amino-acid polypeptide reads, in one-letter code: ORF-B protein (306 aa).

The next 3 helical transmembrane spans lie at 92 to 112 (MIQWDYVFYLLPRVWIMFPFI), 120 to 140 (LTHLLTLTTSVLSATSLVFGW), and 161 to 181 (VIEWLAQFSFLFTHVTLIVVS).

In terms of assembly, interacts with host RACK1.

Its subcellular location is the host cytoplasm. It localises to the host cell membrane. The chain is ORF-B protein from Sander vitreus (Walleye).